The primary structure comprises 606 residues: Pentatricopeptide repeat-containing protein At1g31920 (606 aa).

PPR repeat units lie at residues 96-130 (CTFDFNTMIRGYVNVMSFEEALCFYNEMMQRGNEP), 131-165 (DNFTYPCLLKACTRLKSIREGKQIHGQVFKLGLEA), 166-200 (DVFVQNSLINMYGRCGEMELSSAVFEKLESKTAAS), 201-227 (WSSMVSARAGMGMWSECLLLFRGMCSE), 233-263 (EESGMVSALLACANTGALNLGMSIHGFLLRN), 268-298 (NIIVQTSLVDMYVKCGCLDKALHIFQKMEKR), 299-333 (NNLTYSAMISGLALHGEGESALRMFSKMIKEGLEP), 334-368 (DHVVYVSVLNACSHSGLVKEGRRVFAEMLKEGKVE), and 370-404 (TAEHYGCLVDLLGRAGLLEEALETIQSIPIEKNDV). A type E motif region spans residues 405–480 (IWRTFLSQCR…TPGFSIVELK (76 aa)). Residues 481-511 (GKTHRFVSQDRSHPKCKEIYKMLHQMEWQLK) are type E(+) motif. Positions 512-606 (FEGYSPDLTQ…GGTCSCKDYW (95 aa)) are type DYW motif.

The protein belongs to the PPR family. PCMP-H subfamily.

The sequence is that of Pentatricopeptide repeat-containing protein At1g31920 (PCMP-H11) from Arabidopsis thaliana (Mouse-ear cress).